Reading from the N-terminus, the 244-residue chain is Exosome complex component Rrp41 (244 aa).

It belongs to the RNase PH family. Rrp41 subfamily. As to quaternary structure, component of the archaeal exosome complex. Forms a hexameric ring-like arrangement composed of 3 Rrp41-Rrp42 heterodimers. The hexameric ring associates with a trimer of Rrp4 and/or Csl4 subunits.

It is found in the cytoplasm. Its function is as follows. Catalytic component of the exosome, which is a complex involved in RNA degradation. Has 3'-&gt;5' exoribonuclease activity. Can also synthesize heteromeric RNA-tails. The chain is Exosome complex component Rrp41 from Nitrosopumilus maritimus (strain SCM1).